A 224-amino-acid polypeptide reads, in one-letter code: MASLTSIATPYPSSSQALRLKSSGNTLFSAGVRSAAMVSGHKTLKIQCTSTKPAKPAAEVDWRQKRELLLEKRVRSVDVKEAQRLQKENNFVILDVRPEAEYKAGHPPGAINVEMYRLIREWTAWDIARRLGFAFFGIFSGTEENPEFIQSVEAKLDKEAKIIVACSSAGTMKPTQNLPEGQQSRSLIAAYLLVLNGYKNVFHLEGGIYTWGKEGLPVETIEED.

The transit peptide at 1-48 directs the protein to the chloroplast; sequence MASLTSIATPYPSSSQALRLKSSGNTLFSAGVRSAAMVSGHKTLKIQC. Positions 87 to 220 constitute a Rhodanese domain; it reads KENNFVILDV…WGKEGLPVET (134 aa). Cys-166 functions as the Cysteine persulfide intermediate in the catalytic mechanism.

The protein resides in the plastid. It is found in the chloroplast. This is Rhodanese-like domain-containing protein 14, chloroplastic from Arabidopsis thaliana (Mouse-ear cress).